The chain runs to 332 residues: Small ribosomal subunit biogenesis GTPase RsgA (332 aa).

The 157-residue stretch at 103-259 folds into the CP-type G domain; the sequence is RQQLIAANLD…LIDTPGMREL (157 aa). GTP is bound by residues 148–151 and 201–209; these read TKVD and GSSGAGKST. Residues Cys-281, Cys-286, His-288, and Cys-294 each contribute to the Zn(2+) site.

This sequence belongs to the TRAFAC class YlqF/YawG GTPase family. RsgA subfamily. Monomer. Associates with 30S ribosomal subunit, binds 16S rRNA. Zn(2+) serves as cofactor.

The protein localises to the cytoplasm. One of several proteins that assist in the late maturation steps of the functional core of the 30S ribosomal subunit. Helps release RbfA from mature subunits. May play a role in the assembly of ribosomal proteins into the subunit. Circularly permuted GTPase that catalyzes slow GTP hydrolysis, GTPase activity is stimulated by the 30S ribosomal subunit. The sequence is that of Small ribosomal subunit biogenesis GTPase RsgA from Xylella fastidiosa (strain M12).